The sequence spans 499 residues: MYRTAASRAKALKGILNHNFRASRYASSSAVATSSSSSSWLSGGYSSSLPSMNIPLAGVSLPPPLSDHVEPSKLKTTTLPNGLTIATEMSPNPAASIGLYVDCGSIYETPQFRGATHLLERMAFKSTLNRSHFRLVREIEAIGGNTSASASREQMGYTIDALKTYVPEMVEVLIDSVRNPAFLDWEVNEELRKVKVEIGEFATNPMGFLLEAVHSAGYSGALANPLYAPESAITGLTGEVLENFVFENYTASRMVLAASGVDHEELLKVVEPLLSDLPNVPRPAEPKSQYVGGDFRQHTGGEATHFALAFEVPGWNNEKEAIIATVLQMLMGGGGSFSAGGPGKGMHSWLYLRLLNQHQQFQSCTAFTSVFNNTGLFGIYGCTSPEFASQGIELVASEMNAVADGKVNQKHLDRAKAATKSAILMNLESRMIAAEDIGRQILTYGERKPVDQFLKTVDQLTLKDIADFTSKVITKPLTMATFGDVLNVPSYDSVSKRFR.

Belongs to the peptidase M16 family. Heterodimer of alpha and beta subunits, forming the mitochondrial processing protease (MPP) in which subunit alpha is involved in substrate recognition and binding and subunit beta is the catalytic subunit. Component of the ubiquinol-cytochrome c oxidoreductase (cytochrome b-c1 complex, complex III, CIII), a multisubunit enzyme composed of 10 subunits. The complex is composed of 3 respiratory subunits cytochrome b (MT-CYB), cytochrome c1 (CYC1-1 or CYC1-2) and Rieske protein (UCR1-1 or UCR1-2), 2 core protein subunits MPPalpha1 (or MPPalpha2) and MPPB, and 5 low-molecular weight protein subunits QCR7-1 (or QCR7-2), UCRQ-1 (or UCRQ-2), QCR9, UCRY and probably QCR6-1 (or QCR6-2). The complex exists as an obligatory dimer and forms supercomplexes (SCs) in the inner mitochondrial membrane with NADH-ubiquinone oxidoreductase (complex I, CI), resulting in different assemblies (supercomplexes SCI(1)III(2) and SCI(2)III(4)). Interacts with TIM23-2.

It is found in the plastid. It localises to the chloroplast stroma. The protein resides in the mitochondrion matrix. Its subcellular location is the mitochondrion inner membrane. Substrate recognition and binding subunit of the essential mitochondrial processing protease (MPP), which cleaves the mitochondrial sequence off newly imported precursors proteins. In terms of biological role, component of the ubiquinol-cytochrome c oxidoreductase, a multisubunit transmembrane complex that is part of the mitochondrial electron transport chain which drives oxidative phosphorylation. The respiratory chain contains 3 multisubunit complexes succinate dehydrogenase (complex II, CII), ubiquinol-cytochrome c oxidoreductase (cytochrome b-c1 complex, complex III, CIII) and cytochrome c oxidase (complex IV, CIV), that cooperate to transfer electrons derived from NADH and succinate to molecular oxygen, creating an electrochemical gradient over the inner membrane that drives transmembrane transport and the ATP synthase. The cytochrome b-c1 complex catalyzes electron transfer from ubiquinol to cytochrome c, linking this redox reaction to translocation of protons across the mitochondrial inner membrane, with protons being carried across the membrane as hydrogens on the quinol. In the process called Q cycle, 2 protons are consumed from the matrix, 4 protons are released into the intermembrane space and 2 electrons are passed to cytochrome c. The chain is Probable mitochondrial-processing peptidase subunit alpha-2, chloroplastic/mitochondrial (MPPalpha2) from Arabidopsis thaliana (Mouse-ear cress).